The following is a 277-amino-acid chain: Thiazole synthase (277 aa).

Lys107 (schiff-base intermediate with DXP) is an active-site residue. 1-deoxy-D-xylulose 5-phosphate is bound by residues Gly168, 194–195, and 216–217; these read AG and AS.

It belongs to the ThiG family. Homotetramer. Forms heterodimers with either ThiH or ThiS.

It is found in the cytoplasm. The catalysed reaction is [ThiS sulfur-carrier protein]-C-terminal-Gly-aminoethanethioate + 2-iminoacetate + 1-deoxy-D-xylulose 5-phosphate = [ThiS sulfur-carrier protein]-C-terminal Gly-Gly + 2-[(2R,5Z)-2-carboxy-4-methylthiazol-5(2H)-ylidene]ethyl phosphate + 2 H2O + H(+). The protein operates within cofactor biosynthesis; thiamine diphosphate biosynthesis. Catalyzes the rearrangement of 1-deoxy-D-xylulose 5-phosphate (DXP) to produce the thiazole phosphate moiety of thiamine. Sulfur is provided by the thiocarboxylate moiety of the carrier protein ThiS. In vitro, sulfur can be provided by H(2)S. The polypeptide is Thiazole synthase (Cutibacterium acnes (strain DSM 16379 / KPA171202) (Propionibacterium acnes)).